We begin with the raw amino-acid sequence, 130 residues long: Small ribosomal subunit protein uS11 (130 aa).

This sequence belongs to the universal ribosomal protein uS11 family. Part of the 30S ribosomal subunit. Interacts with proteins S7 and S18. Binds to IF-3.

Functionally, located on the platform of the 30S subunit, it bridges several disparate RNA helices of the 16S rRNA. Forms part of the Shine-Dalgarno cleft in the 70S ribosome. This Thermotoga maritima (strain ATCC 43589 / DSM 3109 / JCM 10099 / NBRC 100826 / MSB8) protein is Small ribosomal subunit protein uS11.